A 314-amino-acid polypeptide reads, in one-letter code: Porphobilinogen deaminase (314 aa).

Cysteine 249 carries the post-translational modification S-(dipyrrolylmethanemethyl)cysteine.

The protein belongs to the HMBS family. In terms of assembly, monomer. Requires dipyrromethane as cofactor.

It catalyses the reaction 4 porphobilinogen + H2O = hydroxymethylbilane + 4 NH4(+). The protein operates within porphyrin-containing compound metabolism; protoporphyrin-IX biosynthesis; coproporphyrinogen-III from 5-aminolevulinate: step 2/4. Tetrapolymerization of the monopyrrole PBG into the hydroxymethylbilane pre-uroporphyrinogen in several discrete steps. The sequence is that of Porphobilinogen deaminase from Brucella suis biovar 1 (strain 1330).